Here is a 205-residue protein sequence, read N- to C-terminus: Auxin-responsive protein IAA8 (205 aa).

Residues 1 to 48 (MECMASTEESLPASSSMDSCSGELPTTTTTAPAQSTASSGCRPPATAA) form a disordered region. Over residues 7–19 (TEESLPASSSMDS) the composition is skewed to polar residues. The span at 25 to 39 (PTTTTTAPAQSTASS) shows a compositional bias: low complexity. Positions 58-62 (LRLGL) match the EAR-like (transcriptional repression) motif. The disordered stretch occupies residues 71–98 (DGNNPSTPRSSLTTATVTADRGGGGGGH). The span at 73-87 (NNPSTPRSSLTTATV) shows a compositional bias: polar residues. Residues 103–199 (SLFVKVYMEG…KRLRIARADD (97 aa)) form the PB1 domain.

This sequence belongs to the Aux/IAA family. As to quaternary structure, homodimers and heterodimers. Highly expressed in green shoots. Expressed in flowers.

It localises to the nucleus. In terms of biological role, aux/IAA proteins are short-lived transcriptional factors that function as repressors of early auxin response genes at low auxin concentrations. This Oryza sativa subsp. japonica (Rice) protein is Auxin-responsive protein IAA8 (IAA8).